Here is a 432-residue protein sequence, read N- to C-terminus: Adenylosuccinate synthetase (432 aa).

GTP contacts are provided by residues 13–19 (GDEGKGK) and 41–43 (GHT). Aspartate 14 functions as the Proton acceptor in the catalytic mechanism. Mg(2+) is bound by residues aspartate 14 and glycine 41. IMP is bound by residues 14–17 (DEGK), 39–42 (NAGH), threonine 131, arginine 145, glutamine 226, threonine 241, and arginine 305. The active-site Proton donor is histidine 42. Residue 301-307 (SVTGRAR) participates in substrate binding. GTP contacts are provided by residues arginine 307, 333–335 (KLD), and 416–418 (STG).

It belongs to the adenylosuccinate synthetase family. Homodimer. Requires Mg(2+) as cofactor.

The protein localises to the cytoplasm. The catalysed reaction is IMP + L-aspartate + GTP = N(6)-(1,2-dicarboxyethyl)-AMP + GDP + phosphate + 2 H(+). The protein operates within purine metabolism; AMP biosynthesis via de novo pathway; AMP from IMP: step 1/2. Its function is as follows. Plays an important role in the de novo pathway of purine nucleotide biosynthesis. Catalyzes the first committed step in the biosynthesis of AMP from IMP. The sequence is that of Adenylosuccinate synthetase from Neisseria meningitidis serogroup B (strain ATCC BAA-335 / MC58).